A 307-amino-acid polypeptide reads, in one-letter code: Elongation factor Ts (307 aa).

The tract at residues 79–82 (TDFV) is involved in Mg(2+) ion dislocation from EF-Tu.

It belongs to the EF-Ts family.

It localises to the cytoplasm. Associates with the EF-Tu.GDP complex and induces the exchange of GDP to GTP. It remains bound to the aminoacyl-tRNA.EF-Tu.GTP complex up to the GTP hydrolysis stage on the ribosome. The polypeptide is Elongation factor Ts (Sinorhizobium medicae (strain WSM419) (Ensifer medicae)).